The sequence spans 312 residues: Serpentine receptor class gamma-31 (312 aa).

7 helical membrane passes run Leu-6–Phe-26, Phe-38–Ile-58, Phe-92–Ile-112, Thr-132–Val-152, Phe-180–Trp-200, Leu-218–Leu-238, and Leu-259–Phe-279.

This sequence belongs to the nematode receptor-like protein srg family.

The protein localises to the membrane. The chain is Serpentine receptor class gamma-31 (srg-31) from Caenorhabditis elegans.